We begin with the raw amino-acid sequence, 188 residues long: Protein K (188 aa).

The chain is Protein K (K) from Escherichia coli.